Reading from the N-terminus, the 123-residue chain is Unclassified hydrophobin 9 (123 aa).

A signal peptide spans 1 to 24 (MFFFNTKPIVFLVVLSVVATFAAA). 4 cysteine pairs are disulfide-bonded: Cys-37-Cys-103, Cys-45-Cys-97, Cys-46-Cys-88, and Cys-104-Cys-117.

Belongs to the fungal hydrophobin family. In terms of assembly, self-assembles to form functional amyloid fibrils called rodlets. Self-assembly into fibrillar rodlets occurs spontaneously at hydrophobic:hydrophilic interfaces and the rodlets further associate laterally to form amphipathic monolayers.

It is found in the secreted. The protein localises to the cell wall. Aerial growth, conidiation, and dispersal of filamentous fungi in the environment rely upon a capability of their secreting small amphipathic proteins called hydrophobins (HPBs) with low sequence identity. Class I can self-assemble into an outermost layer of rodlet bundles on aerial cell surfaces, conferring cellular hydrophobicity that supports fungal growth, development and dispersal; whereas Class II form highly ordered films at water-air interfaces through intermolecular interactions but contribute nothing to the rodlet structure. The protein is Unclassified hydrophobin 9 of Pleurotus ostreatus (strain PC15) (Oyster mushroom).